The sequence spans 341 residues: MSESALNTAIQAIARGLPLEESVLEGAFDTLLSGEAAPEEVGAFLAGLTVRGETANELIAGARIMRRHGRSVSVEGPLLDTCGTGGLPWKSLNTSTASAIVIAAAGGRVAKHGNRSVPPKTGSADVLEALGLQLELSDTAFKSCLEIAGVGFLFARSYHSAMRHVAPIRHKLGIRTIFNLLGPLSNPAGAEYSVLGVYDKQWVTPMAEALKALGTRCAWVVHGLAGIDEISISGPTDVCEVTPASIRHFQITPSDAGLPSHPLSTLEGGAPEENTAAIRDLLDGREGPFRDIVLINAAAGLHVSGMVADLPAGVQRAAQAIDSGAARETLNTLVRTSRESD.

Residues Gly83, Ser91, 93 to 96, 111 to 115, and Ser123 each bind 5-phospho-alpha-D-ribose 1-diphosphate; these read NTST and KHGNR. Gly83 contributes to the anthranilate binding site. Ser95 contributes to the Mg(2+) binding site. Asn114 lines the anthranilate pocket. Arg169 contributes to the anthranilate binding site. Mg(2+)-binding residues include Asp228 and Glu229.

It belongs to the anthranilate phosphoribosyltransferase family. In terms of assembly, homodimer. Mg(2+) serves as cofactor.

It carries out the reaction N-(5-phospho-beta-D-ribosyl)anthranilate + diphosphate = 5-phospho-alpha-D-ribose 1-diphosphate + anthranilate. Its pathway is amino-acid biosynthesis; L-tryptophan biosynthesis; L-tryptophan from chorismate: step 2/5. Its function is as follows. Catalyzes the transfer of the phosphoribosyl group of 5-phosphorylribose-1-pyrophosphate (PRPP) to anthranilate to yield N-(5'-phosphoribosyl)-anthranilate (PRA). The polypeptide is Anthranilate phosphoribosyltransferase (Hyphomonas neptunium (strain ATCC 15444)).